Reading from the N-terminus, the 431-residue chain is Mannan endo-1,4-beta-mannosidase 5 (431 aa).

Positions 1 to 24 (MVPTRNRPMLRILGFFICAAFIYL) are cleaved as a signal peptide. N45 is a glycosylation site (N-linked (GlcNAc...) asparagine). A substrate-binding site is contributed by W97. Residue N168 is glycosylated (N-linked (GlcNAc...) asparagine). N213 is a substrate binding site. E214 serves as the catalytic Proton donor. N282 carries N-linked (GlcNAc...) asparagine glycosylation. Y294 is a binding site for substrate. The N-linked (GlcNAc...) asparagine glycan is linked to N301. The Nucleophile role is filled by E334. Residue W376 coordinates substrate.

This sequence belongs to the glycosyl hydrolase 5 (cellulase A) family. As to expression, expressed in stems.

It localises to the secreted. It catalyses the reaction Random hydrolysis of (1-&gt;4)-beta-D-mannosidic linkages in mannans, galactomannans and glucomannans.. The chain is Mannan endo-1,4-beta-mannosidase 5 (MAN5) from Arabidopsis thaliana (Mouse-ear cress).